A 160-amino-acid chain; its full sequence is 6,7-dimethyl-8-ribityllumazine synthase (160 aa).

5-amino-6-(D-ribitylamino)uracil is bound by residues Trp-28, 59–61 (ALE), and 81–83 (CVI). 86–87 (ET) contacts (2S)-2-hydroxy-3-oxobutyl phosphate. The Proton donor role is filled by His-89. Asn-114 provides a ligand contact to 5-amino-6-(D-ribitylamino)uracil. A (2S)-2-hydroxy-3-oxobutyl phosphate-binding site is contributed by Arg-128.

The protein belongs to the DMRL synthase family.

The catalysed reaction is (2S)-2-hydroxy-3-oxobutyl phosphate + 5-amino-6-(D-ribitylamino)uracil = 6,7-dimethyl-8-(1-D-ribityl)lumazine + phosphate + 2 H2O + H(+). It functions in the pathway cofactor biosynthesis; riboflavin biosynthesis; riboflavin from 2-hydroxy-3-oxobutyl phosphate and 5-amino-6-(D-ribitylamino)uracil: step 1/2. Catalyzes the formation of 6,7-dimethyl-8-ribityllumazine by condensation of 5-amino-6-(D-ribitylamino)uracil with 3,4-dihydroxy-2-butanone 4-phosphate. This is the penultimate step in the biosynthesis of riboflavin. In Corynebacterium urealyticum (strain ATCC 43042 / DSM 7109), this protein is 6,7-dimethyl-8-ribityllumazine synthase.